A 226-amino-acid polypeptide reads, in one-letter code: 2-C-methyl-D-erythritol 4-phosphate cytidylyltransferase (226 aa).

Belongs to the IspD/TarI cytidylyltransferase family. IspD subfamily.

It catalyses the reaction 2-C-methyl-D-erythritol 4-phosphate + CTP + H(+) = 4-CDP-2-C-methyl-D-erythritol + diphosphate. Its pathway is isoprenoid biosynthesis; isopentenyl diphosphate biosynthesis via DXP pathway; isopentenyl diphosphate from 1-deoxy-D-xylulose 5-phosphate: step 2/6. Catalyzes the formation of 4-diphosphocytidyl-2-C-methyl-D-erythritol from CTP and 2-C-methyl-D-erythritol 4-phosphate (MEP). The protein is 2-C-methyl-D-erythritol 4-phosphate cytidylyltransferase of Rhodococcus opacus (strain B4).